We begin with the raw amino-acid sequence, 355 residues long: UDP-3-O-acylglucosamine N-acyltransferase (355 aa).

Histidine 248 functions as the Proton acceptor in the catalytic mechanism.

It belongs to the transferase hexapeptide repeat family. LpxD subfamily. As to quaternary structure, homotrimer.

It catalyses the reaction a UDP-3-O-[(3R)-3-hydroxyacyl]-alpha-D-glucosamine + a (3R)-hydroxyacyl-[ACP] = a UDP-2-N,3-O-bis[(3R)-3-hydroxyacyl]-alpha-D-glucosamine + holo-[ACP] + H(+). Its pathway is bacterial outer membrane biogenesis; LPS lipid A biosynthesis. Catalyzes the N-acylation of UDP-3-O-acylglucosamine using 3-hydroxyacyl-ACP as the acyl donor. Is involved in the biosynthesis of lipid A, a phosphorylated glycolipid that anchors the lipopolysaccharide to the outer membrane of the cell. This Synechococcus elongatus (strain ATCC 33912 / PCC 7942 / FACHB-805) (Anacystis nidulans R2) protein is UDP-3-O-acylglucosamine N-acyltransferase.